A 388-amino-acid polypeptide reads, in one-letter code: 3-ketoacyl-CoA thiolase (388 aa).

The Acyl-thioester intermediate role is filled by Cys-91. Catalysis depends on proton acceptor residues His-343 and Cys-373.

It belongs to the thiolase-like superfamily. Thiolase family. Heterotetramer of two alpha chains (FadB) and two beta chains (FadA).

It localises to the cytoplasm. It catalyses the reaction an acyl-CoA + acetyl-CoA = a 3-oxoacyl-CoA + CoA. The protein operates within lipid metabolism; fatty acid beta-oxidation. In terms of biological role, catalyzes the final step of fatty acid oxidation in which acetyl-CoA is released and the CoA ester of a fatty acid two carbons shorter is formed. This Photorhabdus laumondii subsp. laumondii (strain DSM 15139 / CIP 105565 / TT01) (Photorhabdus luminescens subsp. laumondii) protein is 3-ketoacyl-CoA thiolase.